The sequence spans 214 residues: MSIRTILFDLDGTLIDTNTLIKASFEHTFKEYNLNFSNEEILKFNGPPLVDTFNKIDETKADRMITTFREHNIREHDNFVTAFPHVYDTLEELQNRNISLGIVSTKMRHTVHMGLELTGISKFFSTIITYDDVTHAKPHPEPVQMAMQKLGAHPEHTLMVGDNHHDIVSGQRANVQTAAVAWSLKDTNYLKSFHPDYIIEDIKDIITIVGDSFA.

Catalysis depends on aspartate 9, which acts as the Nucleophile.

It belongs to the HAD-like hydrolase superfamily. PpaX family. Mg(2+) is required as a cofactor.

It catalyses the reaction diphosphate + H2O = 2 phosphate + H(+). In terms of biological role, hydrolyzes pyrophosphate formed during P-Ser-HPr dephosphorylation by HPrK/P. Might play a role in controlling the intracellular pyrophosphate pool. In Oceanobacillus iheyensis (strain DSM 14371 / CIP 107618 / JCM 11309 / KCTC 3954 / HTE831), this protein is Pyrophosphatase PpaX.